The primary structure comprises 162 residues: 2-C-methyl-D-erythritol 2,4-cyclodiphosphate synthase (162 aa).

A divalent metal cation contacts are provided by Asp-12 and His-14. Residues 12–14 (DVH) and 38–39 (HS) contribute to the 4-CDP-2-C-methyl-D-erythritol 2-phosphate site. Residue His-46 participates in a divalent metal cation binding. Residues 60 to 62 (DIG), 65 to 69 (FPDTD), and Arg-146 each bind 4-CDP-2-C-methyl-D-erythritol 2-phosphate.

Belongs to the IspF family. Homotrimer. It depends on a divalent metal cation as a cofactor.

It carries out the reaction 4-CDP-2-C-methyl-D-erythritol 2-phosphate = 2-C-methyl-D-erythritol 2,4-cyclic diphosphate + CMP. The protein operates within isoprenoid biosynthesis; isopentenyl diphosphate biosynthesis via DXP pathway; isopentenyl diphosphate from 1-deoxy-D-xylulose 5-phosphate: step 4/6. In terms of biological role, involved in the biosynthesis of isopentenyl diphosphate (IPP) and dimethylallyl diphosphate (DMAPP), two major building blocks of isoprenoid compounds. Catalyzes the conversion of 4-diphosphocytidyl-2-C-methyl-D-erythritol 2-phosphate (CDP-ME2P) to 2-C-methyl-D-erythritol 2,4-cyclodiphosphate (ME-CPP) with a corresponding release of cytidine 5-monophosphate (CMP). This Bordetella avium (strain 197N) protein is 2-C-methyl-D-erythritol 2,4-cyclodiphosphate synthase.